The sequence spans 336 residues: Fructose-1,6-bisphosphatase class 1 (336 aa).

4 residues coordinate Mg(2+): glutamate 90, aspartate 112, leucine 114, and aspartate 115. Substrate is bound by residues 115–118 (DGSS), asparagine 207, and lysine 273. Glutamate 279 contacts Mg(2+).

This sequence belongs to the FBPase class 1 family. In terms of assembly, homotetramer. It depends on Mg(2+) as a cofactor.

The protein resides in the cytoplasm. The enzyme catalyses beta-D-fructose 1,6-bisphosphate + H2O = beta-D-fructose 6-phosphate + phosphate. It functions in the pathway carbohydrate biosynthesis; gluconeogenesis. The sequence is that of Fructose-1,6-bisphosphatase class 1 from Xanthomonas euvesicatoria pv. vesicatoria (strain 85-10) (Xanthomonas campestris pv. vesicatoria).